The chain runs to 393 residues: Chorismate synthase (393 aa).

NADP(+)-binding residues include Arg-40 and Arg-46. FMN is bound by residues 129 to 131, 251 to 252, Gly-301, 316 to 320, and Arg-342; these read RAS, QA, and KPIST.

Belongs to the chorismate synthase family. As to quaternary structure, homotetramer. Requires FMNH2 as cofactor.

The catalysed reaction is 5-O-(1-carboxyvinyl)-3-phosphoshikimate = chorismate + phosphate. It functions in the pathway metabolic intermediate biosynthesis; chorismate biosynthesis; chorismate from D-erythrose 4-phosphate and phosphoenolpyruvate: step 7/7. Catalyzes the anti-1,4-elimination of the C-3 phosphate and the C-6 proR hydrogen from 5-enolpyruvylshikimate-3-phosphate (EPSP) to yield chorismate, which is the branch point compound that serves as the starting substrate for the three terminal pathways of aromatic amino acid biosynthesis. This reaction introduces a second double bond into the aromatic ring system. This chain is Chorismate synthase, found in Koribacter versatilis (strain Ellin345).